The primary structure comprises 381 residues: Alkanesulfonate monooxygenase (381 aa).

This sequence belongs to the SsuD family. As to quaternary structure, homotetramer.

It carries out the reaction an alkanesulfonate + FMNH2 + O2 = an aldehyde + FMN + sulfite + H2O + 2 H(+). Catalyzes the desulfonation of aliphatic sulfonates. The sequence is that of Alkanesulfonate monooxygenase from Escherichia coli O1:K1 / APEC.